The following is an 852-amino-acid chain: Taste receptor type 1 member 3 (852 aa).

A signal peptide spans 1–20; it reads MLGPAVLGLSLWALLHPGTG. Over 21–570 the chain is Extracellular; it reads APLCLSQQLR…FLAWGEPAVL (550 aa). Residues Asn-85, Asn-130, Asn-264, Asn-285, Asn-380, Asn-411, Asn-432, and Asn-475 are each glycosylated (N-linked (GlcNAc...) asparagine). A required for brazzein responsiveness region spans residues 536 to 545; it reads IACTFCGQDE. A helical membrane pass occupies residues 571–591; sequence LLLLLLSLALGLVLAALGLFV. Residues 592–603 are Cytoplasmic-facing; the sequence is HHRDSPLVQASG. Residues 604 to 624 form a helical membrane-spanning segment; sequence GPLACFGLVCLGLVCLSVLLF. At 625-639 the chain is on the extracellular side; that stretch reads PGQPSPARCLAQQPL. Residues 640–660 form a helical membrane-spanning segment; that stretch reads SHLPLTGCLSTLFLQAAEIFV. At 661 to 682 the chain is on the cytoplasmic side; sequence ESELPLSWADRLSGCLRGPWAW. The chain crosses the membrane as a helical span at residues 683-703; that stretch reads LVVLLAMLVEVALCTWYLVAF. At 704 to 729 the chain is on the extracellular side; that stretch reads PPEVVTDWHMLPTEALVHCRTRSWVS. The chain crosses the membrane as a helical span at residues 730–750; that stretch reads FGLAHATNATLAFLCFLGTFL. The Cytoplasmic portion of the chain corresponds to 751-762; it reads VRSQPGCYNRAR. The helical transmembrane segment at 763 to 783 threads the bilayer; sequence GLTFAMLAYFITWVSFVPLLA. The Extracellular segment spans residues 784 to 789; sequence NVQVVL. The helical transmembrane segment at 790–810 threads the bilayer; sequence RPAVQMGALLLCVLGILAAFH. Residues 811–852 lie on the Cytoplasmic side of the membrane; it reads LPRCYLLMRQPGLNTPEFFLGGGPGDAQGQNDGNTGNQGKHE.

It belongs to the G-protein coupled receptor 3 family. TAS1R subfamily. As to quaternary structure, forms homodimers or heterodimers with TAS1R1 and TAS1R2.

It is found in the cell membrane. In terms of biological role, putative taste receptor. TAS1R1/TAS1R3 responds to the umami taste stimulus (the taste of monosodium glutamate). TAS1R2/TAS1R3 recognizes diverse natural and synthetic sweeteners. TAS1R3 is essential for the recognition and response to the disaccharide trehalose. Sequence differences within and between species can significantly influence the selectivity and specificity of taste responses. This chain is Taste receptor type 1 member 3 (TAS1R3), found in Homo sapiens (Human).